Consider the following 114-residue polypeptide: Large ribosomal subunit protein eL31 (114 aa).

Belongs to the eukaryotic ribosomal protein eL31 family.

This chain is Large ribosomal subunit protein eL31 (RPL31), found in Eremothecium gossypii (strain ATCC 10895 / CBS 109.51 / FGSC 9923 / NRRL Y-1056) (Yeast).